Here is a 176-residue protein sequence, read N- to C-terminus: Inner membrane-spanning protein YciB (176 aa).

Transmembrane regions (helical) follow at residues 24 to 44 (TATA…AFRH), 49 to 69 (PMLW…LVLH), 76 to 96 (WKPT…QLAF), 119 to 139 (LNVV…FVAY), and 149 to 169 (FKLF…SLWL).

Belongs to the YciB family.

Its subcellular location is the cell inner membrane. Plays a role in cell envelope biogenesis, maintenance of cell envelope integrity and membrane homeostasis. This Paraburkholderia xenovorans (strain LB400) protein is Inner membrane-spanning protein YciB.